Consider the following 290-residue polypeptide: ADP-dependent (S)-NAD(P)H-hydrate dehydratase (290 aa).

The 274-residue stretch at 5–278 (NQTLLEKVII…RYLPKIMKII (274 aa)) folds into the YjeF C-terminal domain. Positions 40, 103, and 152 each coordinate (6S)-NADPHX. Position 218 (glycine 218) interacts with AMP. (6S)-NADPHX is bound at residue aspartate 219.

This sequence belongs to the NnrD/CARKD family. As to quaternary structure, homotetramer. The cofactor is Mg(2+).

The catalysed reaction is (6S)-NADHX + ADP = AMP + phosphate + NADH + H(+). It carries out the reaction (6S)-NADPHX + ADP = AMP + phosphate + NADPH + H(+). Its function is as follows. Catalyzes the dehydration of the S-form of NAD(P)HX at the expense of ADP, which is converted to AMP. Together with NAD(P)HX epimerase, which catalyzes the epimerization of the S- and R-forms, the enzyme allows the repair of both epimers of NAD(P)HX, a damaged form of NAD(P)H that is a result of enzymatic or heat-dependent hydration. This Streptococcus pneumoniae (strain ATCC BAA-255 / R6) protein is ADP-dependent (S)-NAD(P)H-hydrate dehydratase.